Reading from the N-terminus, the 120-residue chain is MKLNRVESTRSRHRRVRRKVGGTGDRPRLAVFRSHQHIYAQVIDDQQQHTLVAASSLEPEFKTQYGEGDTCAASTQIGKLIAERSLAKGIQKVVFDRGGKLYHGRVKALAEAAREAGLEF.

Positions 1–10 (MKLNRVESTR) are enriched in basic and acidic residues. The disordered stretch occupies residues 1 to 26 (MKLNRVESTRSRHRRVRRKVGGTGDR). The segment covering 11–20 (SRHRRVRRKV) has biased composition (basic residues).

The protein belongs to the universal ribosomal protein uL18 family. As to quaternary structure, part of the 50S ribosomal subunit; part of the 5S rRNA/L5/L18/L25 subcomplex. Contacts the 5S and 23S rRNAs.

Its function is as follows. This is one of the proteins that bind and probably mediate the attachment of the 5S RNA into the large ribosomal subunit, where it forms part of the central protuberance. This Cyanothece sp. (strain PCC 7425 / ATCC 29141) protein is Large ribosomal subunit protein uL18.